A 675-amino-acid chain; its full sequence is DNA ligase (675 aa).

NAD(+) contacts are provided by residues Asp-34 to Asp-38, Ser-83 to Leu-84, and Glu-117. Lys-119 serves as the catalytic N6-AMP-lysine intermediate. Residues Arg-140, Glu-184, Lys-297, and Lys-321 each coordinate NAD(+). Zn(2+) is bound by residues Cys-415, Cys-418, Cys-433, and Cys-439. The 78-residue stretch at Leu-598 to Phe-675 folds into the BRCT domain.

The protein belongs to the NAD-dependent DNA ligase family. LigA subfamily. Requires Mg(2+) as cofactor. It depends on Mn(2+) as a cofactor.

It catalyses the reaction NAD(+) + (deoxyribonucleotide)n-3'-hydroxyl + 5'-phospho-(deoxyribonucleotide)m = (deoxyribonucleotide)n+m + AMP + beta-nicotinamide D-nucleotide.. Functionally, DNA ligase that catalyzes the formation of phosphodiester linkages between 5'-phosphoryl and 3'-hydroxyl groups in double-stranded DNA using NAD as a coenzyme and as the energy source for the reaction. It is essential for DNA replication and repair of damaged DNA. The sequence is that of DNA ligase from Prosthecochloris aestuarii (strain DSM 271 / SK 413).